A 331-amino-acid chain; its full sequence is Phosphoribosylformylglycinamidine cyclo-ligase (331 aa).

This sequence belongs to the AIR synthase family.

It localises to the cytoplasm. It catalyses the reaction 2-formamido-N(1)-(5-O-phospho-beta-D-ribosyl)acetamidine + ATP = 5-amino-1-(5-phospho-beta-D-ribosyl)imidazole + ADP + phosphate + H(+). Its pathway is purine metabolism; IMP biosynthesis via de novo pathway; 5-amino-1-(5-phospho-D-ribosyl)imidazole from N(2)-formyl-N(1)-(5-phospho-D-ribosyl)glycinamide: step 2/2. The sequence is that of Phosphoribosylformylglycinamidine cyclo-ligase from Clostridium tetani (strain Massachusetts / E88).